Consider the following 766-residue polypeptide: Phospholipid phosphatase-related protein type 4 (766 aa).

Residue Ser-37 is modified to Phosphoserine. A run of 4 helical transmembrane segments spans residues 68–88 (LPCF…SLYF), 120–140 (AIPF…TIMV), 179–199 (FVGV…IIQL), and 248–268 (SFPS…SMYF). Asn-269 carries an N-linked (GlcNAc...) asparagine glycan. Helical transmembrane passes span 277 to 297 (KLLK…CGLT) and 309 to 329 (VYCG…YAVG). Phosphoserine is present on Ser-347. Asn-363 carries an N-linked (GlcNAc...) asparagine glycan. Ser-386 bears the Phosphoserine mark. N-linked (GlcNAc...) asparagine glycosylation occurs at Asn-433. At Ser-439 the chain carries Phosphoserine. 2 disordered regions span residues 454–503 (SKNE…GNQY) and 510–529 (TVPG…IQSR). Asn-456 is a glycosylation site (N-linked (GlcNAc...) asparagine). Phosphoserine occurs at positions 462 and 474. Asn-515 and Asn-545 each carry an N-linked (GlcNAc...) asparagine glycan. Ser-608 is modified (phosphoserine). Disordered regions lie at residues 634–654 (PIIQ…KWKA), 672–705 (DSES…GITT), and 741–766 (PERS…PYKD). The span at 688 to 702 (RKRKHIDSNEHHHHG) shows a compositional bias: basic residues. Positions 743–752 (RSNSPENTRN) are enriched in polar residues.

It belongs to the PA-phosphatase related phosphoesterase family. Post-translationally, O-glycosylated. Probably at Ser-347. As to expression, specifically expressed in neurons (at protein level).

The protein localises to the postsynaptic density membrane. Its function is as follows. Postsynaptic density membrane protein that indirectly regulates glutamatergic synaptic transmission through lysophosphatidic acid (LPA)-mediated signaling pathways. Binds lysophosphatidic acid (LPA) and mediates its internalization into cells. Could act as receptor or a transporter of this lipid at the post-synaptic membrane. Modulates lysophosphatidic acid (LPA) activity in neuron axonal outgrowth during development by attenuating phospholipid-induced axon collapse. The chain is Phospholipid phosphatase-related protein type 4 from Rattus norvegicus (Rat).